A 234-amino-acid polypeptide reads, in one-letter code: Phosphoribosylaminoimidazole-succinocarboxamide synthase (234 aa).

The protein belongs to the SAICAR synthetase family.

The catalysed reaction is 5-amino-1-(5-phospho-D-ribosyl)imidazole-4-carboxylate + L-aspartate + ATP = (2S)-2-[5-amino-1-(5-phospho-beta-D-ribosyl)imidazole-4-carboxamido]succinate + ADP + phosphate + 2 H(+). It functions in the pathway purine metabolism; IMP biosynthesis via de novo pathway; 5-amino-1-(5-phospho-D-ribosyl)imidazole-4-carboxamide from 5-amino-1-(5-phospho-D-ribosyl)imidazole-4-carboxylate: step 1/2. The sequence is that of Phosphoribosylaminoimidazole-succinocarboxamide synthase from Streptococcus pyogenes serotype M3 (strain ATCC BAA-595 / MGAS315).